Reading from the N-terminus, the 137-residue chain is Large ribosomal subunit protein uL16 (137 aa).

It belongs to the universal ribosomal protein uL16 family. As to quaternary structure, part of the 50S ribosomal subunit.

In terms of biological role, binds 23S rRNA and is also seen to make contacts with the A and possibly P site tRNAs. This Pseudomonas fluorescens (strain Pf0-1) protein is Large ribosomal subunit protein uL16.